The following is a 163-amino-acid chain: MFRRLIGVVVATVLLSFQLLVGSATAVELDKATRTVPLNAEGETTVLSLKQVKEGKRLFNYACAQCHAGGVTKTNQNVGLTPEDLALATPNRNNIEGLVDYLKNPTTYDGEEEISEIHPSIKSADIFTAMRNLTDEDLEAIAGHILIQPKIVGTKWGGGKIYY.

An N-terminal signal peptide occupies residues 1-26 (MFRRLIGVVVATVLLSFQLLVGSATA). Cys-63, Cys-66, His-67, and His-118 together coordinate heme c.

The protein belongs to the cytochrome c family. PsbV subfamily. PSII is composed of 1 copy each of membrane proteins PsbA, PsbB, PsbC, PsbD, PsbE, PsbF, PsbH, PsbI, PsbJ, PsbK, PsbL, PsbM, PsbT, PsbX, PsbY, PsbZ, Psb30/Ycf12, peripheral proteins PsbO, CyanoQ (PsbQ), PsbU, PsbV and a large number of cofactors. It forms dimeric complexes. Heme c serves as cofactor.

The protein localises to the cellular thylakoid membrane. One of the extrinsic, lumenal subunits of photosystem II (PSII). PSII is a light-driven water plastoquinone oxidoreductase, using light energy to abstract electrons from H(2)O, generating a proton gradient subsequently used for ATP formation. The extrinsic proteins stabilize the structure of photosystem II oxygen-evolving complex (OEC), the ion environment of oxygen evolution and protect the OEC against heat-induced inactivation. Low-potential cytochrome c that plays a role in the OEC of PSII. The sequence is that of Photosystem II extrinsic protein V from Nostoc punctiforme (strain ATCC 29133 / PCC 73102).